A 318-amino-acid chain; its full sequence is Epithelial-stromal interaction protein 1 (318 aa).

The disordered stretch occupies residues 1–60 (MNTRNRVVNSGLGASPASRPTRDPQDPSGRQGELSPVEDQREGLEAAPKGPSRESVVHAG). Coiled coils occupy residues 73–188 (NINR…HQQY) and 240–280 (LKAE…HQTE).

In terms of tissue distribution, highly expressed in placenta, small intestine, spleen, kidney, thymus, liver, salivary gland and testes. Weakly expressed in breast, skeletal muscle and colon. Highly expressed in breast cancer upon interaction between tumor cells and stromal cells in vitro. Expressed in blood mononuclear cells from patients with systemic lupus erythematosus (SLE).

Its function is as follows. Plays a role in M1 macrophage polarization and is required for the proper regulation of gene expression during M1 versus M2 macrophage differentiation. Might play a role in RELA/p65 and STAT1 phosphorylation and nuclear localization upon activation of macrophages. The sequence is that of Epithelial-stromal interaction protein 1 (EPSTI1) from Homo sapiens (Human).